The primary structure comprises 248 residues: Zinc finger CCCH domain-containing protein 36 (248 aa).

Disordered regions lie at residues M1–S37 and M87–F110. Residues G36–P64 form a C3H1-type 1 zinc finger. Over residues S90–G103 the composition is skewed to gly residues. The KH domain maps to S113–V177. Residues A188–H209 form a disordered region. A compositionally biased stretch (gly residues) spans P192 to S204. The segment at N213 to A240 adopts a C3H1-type 2 zinc-finger fold.

This Arabidopsis thaliana (Mouse-ear cress) protein is Zinc finger CCCH domain-containing protein 36.